Here is a 495-residue protein sequence, read N- to C-terminus: Prenylcysteine oxidase 1-like (495 aa).

Residues 1-22 (MARAAPLLAVLATVLTTAAAGG) form the signal peptide. N-linked (GlcNAc...) asparagine glycosylation is found at N185 and N343.

This sequence belongs to the prenylcysteine oxidase family. Requires FAD as cofactor.

It is found in the secreted. Functionally, likely to have oxidoreductase activity. Required in the mevalonate pathway to regulate prenylation and enhances the bactericidal activity of neutrophils. This is Prenylcysteine oxidase 1-like (Pcyox1l) from Mus musculus (Mouse).